Reading from the N-terminus, the 284-residue chain is Sulfotransferase 4A1 (284 aa).

3 positions are modified to phosphothreonine: Thr-8, Thr-11, and Thr-205.

Belongs to the sulfotransferase 1 family. Highly expressed in the cerebral cortex and frontal lobe, slightly less in the cerebellum, occipital and temporal lobes, relatively low in the medulla and putamen, and lowest in the spinal cord. No expression detected in the pancreas. Highly expressed in fetal brain and occipital lobe, slightly less in the whole brain, frontal lobe, hippocampus, and lung, very low expression in cerebellum, medulla oblongata, temporal lobe, testis, kidney and appendix.

Its subcellular location is the cytoplasm. Atypical sulfotransferase family member with very low affinity for 3'-phospho-5'-adenylyl sulfate (PAPS) and very low catalytic activity towards L-triiodothyronine, thyroxine, estrone, p-nitrophenol, 2-naphthylamine, and 2-beta-naphthol. May have a role in the metabolism of drugs and neurotransmitters in the CNS. In Homo sapiens (Human), this protein is Sulfotransferase 4A1 (SULT4A1).